A 159-amino-acid chain; its full sequence is HSP70 co-chaperone SNL1 (159 aa).

The Perinuclear space portion of the chain corresponds to Met1–Lys12. Residues Leu13–Ile35 form a helical; Signal-anchor for type II membrane protein membrane-spanning segment. Topologically, residues Arg36–Lys159 are cytoplasmic. Positions Asn39–Ala64 are disordered. Residues Lys44 to Lys58 show a composition bias toward basic residues. Residues Gln73 to Lys159 form the BAG domain.

In terms of assembly, interacts with the HSP70 family members SSA1, SSA4, and SSB1. These interactions are strongly reduced by ADP and ATP.

The protein localises to the endoplasmic reticulum membrane. It localises to the nucleus membrane. In terms of biological role, stimulator of ATPase activity of molecular chaperones of the HSP70 family (principally of the SSA class). Stimulation is important for HSP70-substrate complex dissociation after folding of newly synthesized or refolded proteins. SNL1 is probably involved in nuclear pore biogenesis and in particular the folding or refolding of misfolded NUP116, GLE2 and NIC96. This chain is HSP70 co-chaperone SNL1 (SNL1), found in Saccharomyces cerevisiae (strain ATCC 204508 / S288c) (Baker's yeast).